We begin with the raw amino-acid sequence, 591 residues long: V-type ATP synthase alpha chain (591 aa).

232 to 239 (GPFGAGKT) is a binding site for ATP.

It belongs to the ATPase alpha/beta chains family.

The catalysed reaction is ATP + H2O + 4 H(+)(in) = ADP + phosphate + 5 H(+)(out). Functionally, produces ATP from ADP in the presence of a proton gradient across the membrane. The V-type alpha chain is a catalytic subunit. This chain is V-type ATP synthase alpha chain, found in Clostridium perfringens (strain SM101 / Type A).